The chain runs to 345 residues: V-type proton ATPase subunit d (345 aa).

At Met1 the chain carries N-acetylmethionine.

It belongs to the V-ATPase V0D/AC39 subunit family. As to quaternary structure, V-ATPase is a heteromultimeric enzyme composed of a peripheral catalytic V1 complex (components A to H) attached to an integral membrane V0 proton pore complex (components: a, c, c', c'', d, e, f and VOA1).

Its subcellular location is the vacuole membrane. In terms of biological role, subunit of the V0 complex of vacuolar(H+)-ATPase (V-ATPase), a multisubunit enzyme composed of a peripheral complex (V1) that hydrolyzes ATP and a membrane integral complex (V0) that translocates protons. V-ATPase is responsible for acidifying and maintaining the pH of intracellular compartments. This subunit is a non-integral membrane component of the membrane pore domain and is required for proper assembly of the V0 sector. Might be involved in the regulated assembly of V1 subunits onto the membrane sector or alternatively may prevent the passage of protons through V0 pores. This Saccharomyces cerevisiae (strain ATCC 204508 / S288c) (Baker's yeast) protein is V-type proton ATPase subunit d.